The primary structure comprises 325 residues: Probable tRNA pseudouridine synthase B (325 aa).

Aspartate 71 acts as the Nucleophile in catalysis. One can recognise a PUA domain in the interval 238–313 (LPKIYVKDSA…VAASIERVIM (76 aa)).

This sequence belongs to the pseudouridine synthase TruB family. Type 2 subfamily.

It carries out the reaction uridine(55) in tRNA = pseudouridine(55) in tRNA. Could be responsible for synthesis of pseudouridine from uracil-55 in the psi GC loop of transfer RNAs. The protein is Probable tRNA pseudouridine synthase B of Korarchaeum cryptofilum (strain OPF8).